The sequence spans 247 residues: V-type proton ATPase subunit D (247 aa).

Belongs to the V-ATPase D subunit family. V-ATPase is a heteromultimeric enzyme made up of two complexes: the ATP-hydrolytic V1 complex and the proton translocation V0 complex. The V1 complex consists of three catalytic AB heterodimers that form a heterohexamer, three peripheral stalks each consisting of EG heterodimers, one central rotor including subunits D and F, and the regulatory subunits C and H. The proton translocation complex V0 consists of the proton transport subunit a, a ring of proteolipid subunits c9c'', rotary subunit d, subunits e and f, and the accessory subunits ATP6AP1/Ac45 and ATP6AP2/PRR. Interacts with SNX10.

It localises to the membrane. The protein localises to the cytoplasmic vesicle. The protein resides in the clathrin-coated vesicle membrane. Its subcellular location is the cytoplasm. It is found in the cytoskeleton. It localises to the microtubule organizing center. The protein localises to the centrosome. The protein resides in the cell projection. Its subcellular location is the cilium. Its function is as follows. Subunit of the V1 complex of vacuolar(H+)-ATPase (V-ATPase), a multisubunit enzyme composed of a peripheral complex (V1) that hydrolyzes ATP and a membrane integral complex (V0) that translocates protons. V-ATPase is responsible for acidifying and maintaining the pH of intracellular compartments and in some cell types, is targeted to the plasma membrane, where it is responsible for acidifying the extracellular environment. May play a role in cilium biogenesis through regulation of the transport and the localization of proteins to the cilium. This chain is V-type proton ATPase subunit D (ATP6V1D), found in Oryctolagus cuniculus (Rabbit).